The sequence spans 357 residues: Isopentenyl-diphosphate delta-isomerase (357 aa).

13 to 14 (RK) is a substrate binding site. FMN-binding positions include Ser71, 72–74 (SMT), Ser102, and Asn131. 102–104 (SMR) is a substrate binding site. Gln166 is a substrate binding site. Residue Glu167 coordinates Mg(2+). Residues Lys198 and 311–312 (AR) contribute to the FMN site.

The protein belongs to the IPP isomerase type 2 family. Homooctamer. Dimer of tetramers. The cofactor is FMN. NADPH is required as a cofactor. Mg(2+) serves as cofactor.

Its subcellular location is the cytoplasm. The enzyme catalyses isopentenyl diphosphate = dimethylallyl diphosphate. In terms of biological role, involved in the biosynthesis of isoprenoids. Catalyzes the 1,3-allylic rearrangement of the homoallylic substrate isopentenyl (IPP) to its allylic isomer, dimethylallyl diphosphate (DMAPP). The polypeptide is Isopentenyl-diphosphate delta-isomerase (Chlorobium chlorochromatii (strain CaD3)).